The sequence spans 4625 residues: Dynein-1-alpha heavy chain, flagellar inner arm I1 complex (4625 aa).

Residues 1-1919 (MDRRLEWVKE…LIRQCTGLFK (1919 aa)) are stem. Over residues 70–84 (EQAPEAEDGEGEEHD) the composition is skewed to acidic residues. Positions 70–163 (EQAPEAEDGE…DEPPAPPAPK (94 aa)) are disordered. A compositionally biased stretch (low complexity) spans 111–140 (EDAPAAAAEANGANPEDEAAAPADGAADGA). Acidic residues predominate over residues 144 to 155 (GGEEGDGAEGDE). An ATP-binding site is contributed by 960–967 (AGTNSGKS). Coiled-coil stretches lie at residues 1227–1259 (EELK…RYRT) and 1339–1409 (TVEL…AVRQ). AAA regions lie at residues 1920–2141 (YGYE…VLVM), 2201–2437 (DVVE…RRPK), 2550–2800 (EPPA…IYEG), and 2906–3155 (NFYN…LRRY). Residues 1958–1965 (GPAGTGKT), 2242–2249 (GQTGGGKT), 2588–2595 (GESGTAKS), and 2945–2952 (GVGGSGKQ) each bind ATP. 2 coiled-coil regions span residues 3192-3297 (LEKL…IRSY) and 3400-3494 (KRKK…LIGD). The segment at 3192–3494 (LEKLIQAAVE…ESRRDRLIGD (303 aa)) is stalk. AAA stretches follow at residues 3542–3773 (LTSD…EIAE) and 3998–4216 (ITRF…LIST). 3680–3687 (GPEISGKT) serves as a coordination point for ATP. Positions 3701–3788 (EQLLNVTLRH…KVTAAEIEET (88 aa)) form a coiled coil.

This sequence belongs to the dynein heavy chain family. As to quaternary structure, the I1 inner arm complex (also known as the f dynein complex) is a two-headed isoform composed of two heavy chains (1-alpha and 1-beta), three intermediate chains and three light chains. I1 occupies a specific position proximal to the first radial spoke and repeats every 96 nm along the length of the axoneme.

It is found in the cell projection. The protein resides in the cilium. It localises to the flagellum. The protein localises to the cytoplasm. Its subcellular location is the cytoskeleton. It is found in the flagellum axoneme. Functionally, force generating protein of eukaryotic cilia and flagella. Produces force towards the minus ends of microtubules. Dynein has ATPase activity; the force-producing power stroke is thought to occur on release of ADP. Required for assembly of the I1 inner arm complex and its targeting to the appropriate axoneme location. Also required for phototaxis. This is Dynein-1-alpha heavy chain, flagellar inner arm I1 complex (DHC1) from Chlamydomonas reinhardtii (Chlamydomonas smithii).